Reading from the N-terminus, the 431-residue chain is Adenylosuccinate synthetase (431 aa).

Residues 13–19 and 41–43 contribute to the GTP site; these read GDEGKGK and GHT. The active-site Proton acceptor is the aspartate 14. Aspartate 14 and glycine 41 together coordinate Mg(2+). Residues 14–17, 39–42, threonine 130, arginine 144, glutamine 225, threonine 240, and arginine 304 each bind IMP; these read DEGK and NAGH. Histidine 42 serves as the catalytic Proton donor. 300-306 contacts substrate; that stretch reads ATTGRKR. Residues arginine 306, 332–334, and 415–417 contribute to the GTP site; these read KLD and STG.

Belongs to the adenylosuccinate synthetase family. As to quaternary structure, homodimer. It depends on Mg(2+) as a cofactor.

It localises to the cytoplasm. It carries out the reaction IMP + L-aspartate + GTP = N(6)-(1,2-dicarboxyethyl)-AMP + GDP + phosphate + 2 H(+). It participates in purine metabolism; AMP biosynthesis via de novo pathway; AMP from IMP: step 1/2. In terms of biological role, plays an important role in the de novo pathway of purine nucleotide biosynthesis. Catalyzes the first committed step in the biosynthesis of AMP from IMP. This Shewanella loihica (strain ATCC BAA-1088 / PV-4) protein is Adenylosuccinate synthetase.